We begin with the raw amino-acid sequence, 386 residues long: Phosphoglycerate kinase (386 aa).

Substrate-binding positions include 21–23, Arg-36, 59–62, Arg-113, and Arg-146; these read DLN and HLGR. ATP-binding positions include Lys-197, Glu-314, and 340–343; that span reads GGDT.

This sequence belongs to the phosphoglycerate kinase family. As to quaternary structure, monomer.

The protein resides in the cytoplasm. It carries out the reaction (2R)-3-phosphoglycerate + ATP = (2R)-3-phospho-glyceroyl phosphate + ADP. It functions in the pathway carbohydrate degradation; glycolysis; pyruvate from D-glyceraldehyde 3-phosphate: step 2/5. The polypeptide is Phosphoglycerate kinase (Ectopseudomonas mendocina (strain ymp) (Pseudomonas mendocina)).